Consider the following 785-residue polypeptide: Uncoating factor OPG117 (785 aa).

The active site involves aspartate 170. The interval 342 to 469 (TERGDHIVWI…ELMNIINDIQ (128 aa)) is primase. Positions 477-639 (KNRELYEKTL…FSQPSGREAA (163 aa)) constitute an SF3 helicase domain. 503–510 (GETATGKS) lines the ATP pocket.

It belongs to the orthopoxvirus OPG117 family. In terms of assembly, homomultimer; hexamer. Interacts with OPG148.

The protein localises to the host cytoplasm. In terms of biological role, multifunctional protein required for genome uncoating and replication. Major viral uncoating protein that is required for the release of the viral genome from incoming viral cores containing the viral DNA genome. Possesses an ATPase activity that is required for hexamerization and uncoating. In Bos taurus (Bovine), this protein is Uncoating factor OPG117 (OPG117).